An 830-amino-acid polypeptide reads, in one-letter code: DNA gyrase subunit A (830 aa).

Residues 34–514 (LPDVRDGLKP…NHSDINMEDL (481 aa)) form the Topo IIA-type catalytic domain. The O-(5'-phospho-DNA)-tyrosine intermediate role is filled by Tyr-122. The GyrA-box motif lies at 541–547 (QRRGGKG).

This sequence belongs to the type II topoisomerase GyrA/ParC subunit family. In terms of assembly, heterotetramer, composed of two GyrA and two GyrB chains. In the heterotetramer, GyrA contains the active site tyrosine that forms a transient covalent intermediate with DNA, while GyrB binds cofactors and catalyzes ATP hydrolysis.

Its subcellular location is the cytoplasm. It carries out the reaction ATP-dependent breakage, passage and rejoining of double-stranded DNA.. A type II topoisomerase that negatively supercoils closed circular double-stranded (ds) DNA in an ATP-dependent manner to modulate DNA topology and maintain chromosomes in an underwound state. Negative supercoiling favors strand separation, and DNA replication, transcription, recombination and repair, all of which involve strand separation. Also able to catalyze the interconversion of other topological isomers of dsDNA rings, including catenanes and knotted rings. Type II topoisomerases break and join 2 DNA strands simultaneously in an ATP-dependent manner. This chain is DNA gyrase subunit A, found in Buchnera aphidicola subsp. Acyrthosiphon pisum (strain APS) (Acyrthosiphon pisum symbiotic bacterium).